The following is a 295-amino-acid chain: UDP-N-acetylenolpyruvoylglucosamine reductase (295 aa).

The FAD-binding PCMH-type domain occupies 23–188 (KVGGPADFLA…ISAKFALKPG (166 aa)). Residue arginine 167 is part of the active site. Serine 217 functions as the Proton donor in the catalytic mechanism. The active site involves glutamate 287.

The protein belongs to the MurB family. The cofactor is FAD.

The protein localises to the cytoplasm. It carries out the reaction UDP-N-acetyl-alpha-D-muramate + NADP(+) = UDP-N-acetyl-3-O-(1-carboxyvinyl)-alpha-D-glucosamine + NADPH + H(+). Its pathway is cell wall biogenesis; peptidoglycan biosynthesis. In terms of biological role, cell wall formation. This Streptococcus pyogenes serotype M49 (strain NZ131) protein is UDP-N-acetylenolpyruvoylglucosamine reductase.